A 326-amino-acid chain; its full sequence is Malate dehydrogenase (326 aa).

Gly-12–Ala-18 lines the NAD(+) pocket. Residues Arg-93 and Arg-99 each contribute to the substrate site. NAD(+) contacts are provided by residues Asn-106, Gln-113, and Val-130–Asn-132. Substrate is bound by residues Asn-132 and Arg-163. Residue His-188 is the Proton acceptor of the active site.

The protein belongs to the LDH/MDH superfamily. MDH type 2 family.

It carries out the reaction (S)-malate + NAD(+) = oxaloacetate + NADH + H(+). Functionally, catalyzes the reversible oxidation of malate to oxaloacetate. The protein is Malate dehydrogenase of Corynebacterium diphtheriae (strain ATCC 700971 / NCTC 13129 / Biotype gravis).